Consider the following 62-residue polypeptide: uncharacterized protein (62 aa).

The protein resides in the plastid. The protein localises to the chloroplast. This is an uncharacterized protein from Porphyra purpurea (Red seaweed).